Consider the following 240-residue polypeptide: Methylthioribulose-1-phosphate dehydratase (240 aa).

Cysteine 99 lines the substrate pocket. Residues histidine 116 and histidine 118 each contribute to the Zn(2+) site. The active-site Proton donor/acceptor is the glutamate 145. Histidine 201 contributes to the Zn(2+) binding site.

It belongs to the aldolase class II family. MtnB subfamily. It depends on Zn(2+) as a cofactor.

The protein localises to the cytoplasm. It catalyses the reaction 5-(methylsulfanyl)-D-ribulose 1-phosphate = 5-methylsulfanyl-2,3-dioxopentyl phosphate + H2O. Its pathway is amino-acid biosynthesis; L-methionine biosynthesis via salvage pathway; L-methionine from S-methyl-5-thio-alpha-D-ribose 1-phosphate: step 2/6. Catalyzes the dehydration of methylthioribulose-1-phosphate (MTRu-1-P) into 2,3-diketo-5-methylthiopentyl-1-phosphate (DK-MTP-1-P). This Ajellomyces capsulatus (strain H143) (Darling's disease fungus) protein is Methylthioribulose-1-phosphate dehydratase.